Consider the following 341-residue polypeptide: Putative UPF0607 protein FLJ37424 (341 aa).

Disordered stretches follow at residues 72–131 (PKTE…NPRP) and 216–283 (GLLM…LPCL). Over residues 79–101 (EEPKEATEVKDQVETQGQEDNKR) the composition is skewed to basic and acidic residues. Polar residues predominate over residues 108–127 (EAASTSRPLETQGNLTSSWY). Residues 243–252 (AGHRSHKRKL) show a composition bias toward basic residues.

This sequence belongs to the UPF0607 family.

This chain is Putative UPF0607 protein FLJ37424, found in Homo sapiens (Human).